A 130-amino-acid polypeptide reads, in one-letter code: Small ribosomal subunit protein uS8 (130 aa).

It belongs to the universal ribosomal protein uS8 family. In terms of assembly, part of the 30S ribosomal subunit. Contacts proteins S5 and S12.

One of the primary rRNA binding proteins, it binds directly to 16S rRNA central domain where it helps coordinate assembly of the platform of the 30S subunit. This Aeromonas salmonicida (strain A449) protein is Small ribosomal subunit protein uS8.